The sequence spans 75 residues: Large ribosomal subunit protein bL31c (75 aa).

It belongs to the bacterial ribosomal protein bL31 family. Type A subfamily. In terms of assembly, part of the 50S ribosomal subunit.

The protein resides in the plastid. The protein localises to the chloroplast. Binds the 23S rRNA. This Cyanidium caldarium (Red alga) protein is Large ribosomal subunit protein bL31c.